Reading from the N-terminus, the 212-residue chain is Peptide methionine sulfoxide reductase MsrA (212 aa).

C52 is a catalytic residue.

This sequence belongs to the MsrA Met sulfoxide reductase family.

It catalyses the reaction L-methionyl-[protein] + [thioredoxin]-disulfide + H2O = L-methionyl-(S)-S-oxide-[protein] + [thioredoxin]-dithiol. The enzyme catalyses [thioredoxin]-disulfide + L-methionine + H2O = L-methionine (S)-S-oxide + [thioredoxin]-dithiol. Its function is as follows. Has an important function as a repair enzyme for proteins that have been inactivated by oxidation. Catalyzes the reversible oxidation-reduction of methionine sulfoxide in proteins to methionine. The polypeptide is Peptide methionine sulfoxide reductase MsrA (Shigella boydii serotype 4 (strain Sb227)).